The following is a 136-amino-acid chain: Small ribosomal subunit protein uS9 (136 aa).

Positions 115–136 are disordered; the sequence is KVKERKKPGLRKARKARQFSKR. Residues 117–136 are compositionally biased toward basic residues; it reads KERKKPGLRKARKARQFSKR.

It belongs to the universal ribosomal protein uS9 family.

In Mycoplasmopsis pulmonis (strain UAB CTIP) (Mycoplasma pulmonis), this protein is Small ribosomal subunit protein uS9.